The chain runs to 75 residues: MPHVDIKCFPRELTDEQKTALAADITEVLIRHLNSKESAVSVALTQVEPDAWQAVWDSEIAPQMAQLIKQPGYSM.

Catalysis depends on proline 2, which acts as the Proton acceptor; via imino nitrogen.

Belongs to the 4-oxalocrotonate tautomerase family. PptA subfamily. As to quaternary structure, homodimer.

It is found in the cytoplasm. This is Tautomerase PptA from Klebsiella pneumoniae subsp. pneumoniae (strain ATCC 700721 / MGH 78578).